A 342-amino-acid polypeptide reads, in one-letter code: S-adenosylmethionine:tRNA ribosyltransferase-isomerase (342 aa).

It belongs to the QueA family. Monomer.

The protein localises to the cytoplasm. The catalysed reaction is 7-aminomethyl-7-carbaguanosine(34) in tRNA + S-adenosyl-L-methionine = epoxyqueuosine(34) in tRNA + adenine + L-methionine + 2 H(+). The protein operates within tRNA modification; tRNA-queuosine biosynthesis. Functionally, transfers and isomerizes the ribose moiety from AdoMet to the 7-aminomethyl group of 7-deazaguanine (preQ1-tRNA) to give epoxyqueuosine (oQ-tRNA). This chain is S-adenosylmethionine:tRNA ribosyltransferase-isomerase, found in Listeria monocytogenes serotype 4a (strain HCC23).